A 601-amino-acid polypeptide reads, in one-letter code: DnaJ-like protein MG200 (601 aa).

Positions 5 to 77 constitute a J domain; sequence KRDYYEVLGI…DKYGFDGVDG (73 aa). Disordered stretches follow at residues 143-163 and 205-272; these read VQQN…VPGE and VDSE…EPIP. A compositionally biased stretch (basic and acidic residues) spans 151–160; it reads KDPDELRSKV. The segment covering 263–272 has biased composition (pro residues); it reads EPTPIPEPIP.

In Mycoplasma genitalium (strain ATCC 33530 / DSM 19775 / NCTC 10195 / G37) (Mycoplasmoides genitalium), this protein is DnaJ-like protein MG200.